A 430-amino-acid polypeptide reads, in one-letter code: Asparagine--tRNA ligase (430 aa).

The protein belongs to the class-II aminoacyl-tRNA synthetase family. As to quaternary structure, homodimer.

The protein localises to the cytoplasm. The catalysed reaction is tRNA(Asn) + L-asparagine + ATP = L-asparaginyl-tRNA(Asn) + AMP + diphosphate + H(+). The polypeptide is Asparagine--tRNA ligase (Listeria monocytogenes serovar 1/2a (strain ATCC BAA-679 / EGD-e)).